Here is a 470-residue protein sequence, read N- to C-terminus: Desmin (470 aa).

The segment at 2–108 is head; that stretch reads SQAYSSSQRV…QEFLTTRTNE (107 aa). Ser7 bears the Phosphoserine; by CDK1 mark. Ser12 is modified (phosphoserine; by AURKB). Omega-N-methylarginine is present on Arg16. Residue Thr17 is modified to Phosphothreonine; by AURKB and ROCK1. Ser28 is subject to Phosphoserine; by CDK1. Residue Ser31 is modified to Phosphoserine. The residue at position 32 (Ser32) is a Phosphoserine; by CDK1. Position 37 is an asymmetric dimethylarginine; alternate (Arg37). An Omega-N-methylarginine; alternate modification is found at Arg37. A Phosphoserine modification is found at Ser45. Arg58 carries the post-translational modification ADP-ribosylarginine. The residue at position 60 (Ser60) is a Phosphoserine; by AURKB. Residue Arg70 is modified to Omega-N-methylarginine. Thr77 bears the Phosphothreonine; by ROCK1 mark. Residue Ser81 is modified to Phosphoserine. The IF rod domain maps to 108-416; that stretch reads EKVELQELND…KLLEGEESRI (309 aa). A coil 1A region spans residues 109 to 141; sequence KVELQELNDRFANYIEKVRFLEQQNAALAAEVN. The segment at 142–151 is linker 1; the sequence is RLKGREPTRV. A coil 1B region spans residues 152-252; the sequence is AEIYEEELRE…HEEEIRELQA (101 aa). The linker 12 stretch occupies residues 253 to 268; the sequence is QLQEQQVQVEMDMSKP. Positions 268-415 are interaction with NEB; it reads PDLTAALRDI…RKLLEGEESR (148 aa). Residues 269–287 form a coil 2A region; that stretch reads DLTAALRDIRAQYETIAAK. Positions 288–295 are linker 2; sequence NISEAEEW. Residues Ser290, Ser358, Ser361, and Ser424 each carry the phosphoserine modification. The coil 2B stretch occupies residues 296–412; sequence YKSKVSDLTQ…ATYRKLLEGE (117 aa). Residues 413-470 are tail; sequence ESRINLPIQTFSALNFRETSPEQRGSEVHTKKTVMIKTIETRDGEVVSEATQQQHEVL. The segment at 438–453 is interaction with CRYAB; that stretch reads SEVHTKKTVMIKTIET.

It belongs to the intermediate filament family. Homomer. Interacts with DST. Interacts with MTM1. Interacts with EPPK1; interaction is dependent of higher-order structure of intermediate filament. Interacts with CRYAB. Interacts with NEB (via nebulin repeats 160-164). Interacts (via rod region) with NEBL (via nebulin repeats 1-5). Interacts with ASB2; the interaction targets DES for proteasomal degradation. Interacts with PKP1. Interacts with FLII. ADP-ribosylation prevents ability to form intermediate filaments. Post-translationally, phosphorylation at Ser-7, Ser-28 and Ser-32 by CDK1 and phosphorylation at Ser-60 by AURKB contribute to efficient separation of desmin intermediate filaments during mitosis. In terms of processing, ubiquitination by a SCF-like complex containing ASB2 leads to proteasomal degradation.

Its subcellular location is the cytoplasm. The protein resides in the myofibril. It localises to the sarcomere. It is found in the z line. The protein localises to the cell membrane. Its subcellular location is the sarcolemma. The protein resides in the nucleus. It localises to the cell tip. It is found in the nucleus envelope. Muscle-specific type III intermediate filament essential for proper muscular structure and function. Plays a crucial role in maintaining the structure of sarcomeres, inter-connecting the Z-disks and forming the myofibrils, linking them not only to the sarcolemmal cytoskeleton, but also to the nucleus and mitochondria, thus providing strength for the muscle fiber during activity. In adult striated muscle they form a fibrous network connecting myofibrils to each other and to the plasma membrane from the periphery of the Z-line structures. May act as a sarcomeric microtubule-anchoring protein: specifically associates with detyrosinated tubulin-alpha chains, leading to buckled microtubules and mechanical resistance to contraction. Required for nuclear membrane integrity, via anchoring at the cell tip and nuclear envelope, resulting in maintenance of microtubule-derived intracellular mechanical forces. Contributes to the transcriptional regulation of the NKX2-5 gene in cardiac progenitor cells during a short period of cardiomyogenesis and in cardiac side population stem cells in the adult. Plays a role in maintaining an optimal conformation of nebulette (NEB) on heart muscle sarcomeres to bind and recruit cardiac alpha-actin. This chain is Desmin (DES), found in Bos taurus (Bovine).